A 474-amino-acid chain; its full sequence is H/ACA ribonucleoprotein complex subunit cbf5 (474 aa).

Asp100 acts as the Nucleophile in catalysis. The 76-residue stretch at 271-346 folds into the PUA domain; it reads YKRIVVKDSA…VVAKVKRCIM (76 aa). 2 disordered regions span residues 361–391 and 406–474; these read SMKKKTLKKEGKLDKYGRPNENTPADWSKSY and PVVA…KKSE. Basic and acidic residues predominate over residues 368–378; sequence KKEGKLDKYGR. Over residues 406–419 the composition is skewed to low complexity; it reads PVVAPAAPTVEAEV. Residues 423–434 show a composition bias toward basic and acidic residues; it reads EDSKKRKSVESS. The tract at residues 434–468 is 7 X 3 AA approximate tandem repeats of K-K-E; it reads SEKDEDEAAKKEEKRRKKEAKKEKKEKKEKKEKKE. Tandem repeats lie at residues 443-445, 450-452, 454-456, 457-459, 460-462, 463-465, and 466-468. Residues 446–474 are compositionally biased toward basic residues; the sequence is EKRRKKEAKKEKKEKKEKKEKKEKKKKSE.

The protein belongs to the pseudouridine synthase TruB family. Component of the small nucleolar ribonucleoprotein particles containing H/ACA-type snoRNAs (H/ACA snoRNPs).

It localises to the nucleus. Its subcellular location is the nucleolus. The catalysed reaction is uridine in 5S rRNA = pseudouridine in 5S rRNA. It carries out the reaction uridine in snRNA = pseudouridine in snRNA. The enzyme catalyses a uridine in mRNA = a pseudouridine in mRNA. Catalytic subunit of H/ACA small nucleolar ribonucleoprotein (H/ACA snoRNP) complex, which catalyzes pseudouridylation of rRNA. This involves the isomerization of uridine such that the ribose is subsequently attached to C5, instead of the normal N1. Pseudouridine ('psi') residues may serve to stabilize the conformation of rRNAs and play a central role in ribosomal RNA processing. The H/ACA snoRNP complex also mediates pseudouridylation of other types of RNAs. Catalyzes pseudouridylation at position 93 in U2 snRNA. Also catalyzes pseudouridylation of mRNAs; H/ACA-type snoRNAs probably guide pseudouridylation of mRNAs. The polypeptide is H/ACA ribonucleoprotein complex subunit cbf5 (cbf5) (Schizosaccharomyces pombe (strain 972 / ATCC 24843) (Fission yeast)).